The chain runs to 157 residues: Transcription elongation factor GreA (157 aa).

The stretch at Arg13–Gln75 forms a coiled coil.

Belongs to the GreA/GreB family.

Functionally, necessary for efficient RNA polymerase transcription elongation past template-encoded arresting sites. The arresting sites in DNA have the property of trapping a certain fraction of elongating RNA polymerases that pass through, resulting in locked ternary complexes. Cleavage of the nascent transcript by cleavage factors such as GreA or GreB allows the resumption of elongation from the new 3'terminus. GreA releases sequences of 2 to 3 nucleotides. This chain is Transcription elongation factor GreA, found in Roseiflexus castenholzii (strain DSM 13941 / HLO8).